Here is a 146-residue protein sequence, read N- to C-terminus: uncharacterized protein (146 aa).

4 helical membrane-spanning segments follow: residues 1–21, 35–55, 87–107, and 111–131; these read MFAN…AASL, AAVY…LFVG, GGAG…GVGH, and AIAA…GGHL.

Its subcellular location is the cell membrane. This is an uncharacterized protein from Mycobacterium tuberculosis (strain CDC 1551 / Oshkosh).